A 251-amino-acid chain; its full sequence is MAAEPTIDALGQFRLHHGLGPIGGLVNFTQSNEIMVLGTAIVLGIIALGMRQRAVVPGRLQSLVEISYNFIMGLCIEQIGHEGKKFFPFIFTLFFFVLMGNLLGLFPYFFTYTSHVAVTGGLAVLVIVLVTAVALRYHGLHFFSYFFPPGAPKALAPIIVPIEIISYLSRPVSLSIRLFANMVAGHVMFEVFATFMFLLIGALGTFGYFAALLPMTLNVTLVGFELLVAFLQAYVFAILTCIYLHDAVHLH.

The next 7 helical transmembrane spans lie at 28–48, 63–80, 86–106, 115–135, 154–176, 195–215, and 219–239; these read FTQSNEIMVLGTAIVLGIIAL, LVEISYNFIMGLCIEQIG, FFPFIFTLFFFVLMGNLLGLF, HVAVTGGLAVLVIVLVTAVAL, ALAPIIVPIEIISYLSRPVSLSI, FMFLLIGALGTFGYFAALLPM, and VTLVGFELLVAFLQAYVFAIL.

This sequence belongs to the ATPase A chain family. F-type ATPases have 2 components, CF(1) - the catalytic core - and CF(0) - the membrane proton channel. CF(1) has five subunits: alpha(3), beta(3), gamma(1), delta(1), epsilon(1). CF(0) has three main subunits: a(1), b(2) and c(9-12). The alpha and beta chains form an alternating ring which encloses part of the gamma chain. CF(1) is attached to CF(0) by a central stalk formed by the gamma and epsilon chains, while a peripheral stalk is formed by the delta and b chains.

The protein resides in the cell inner membrane. Functionally, key component of the proton channel; it plays a direct role in the translocation of protons across the membrane. The polypeptide is ATP synthase subunit a (Granulibacter bethesdensis (strain ATCC BAA-1260 / CGDNIH1)).